Reading from the N-terminus, the 156-residue chain is Cyanate hydratase (156 aa).

Catalysis depends on residues R96, E99, and S122.

This sequence belongs to the cyanase family.

The enzyme catalyses cyanate + hydrogencarbonate + 3 H(+) = NH4(+) + 2 CO2. Its function is as follows. Catalyzes the reaction of cyanate with bicarbonate to produce ammonia and carbon dioxide. The polypeptide is Cyanate hydratase (Serratia proteamaculans (strain 568)).